The chain runs to 121 residues: Small ribosomal subunit protein bS21m (121 aa).

The transit peptide at 1-14 directs the protein to the mitochondrion; the sequence is MNSSYFPGVLGVRW.

This sequence belongs to the bacterial ribosomal protein bS21 family. Component of the mitochondrial small ribosomal subunit (mt-SSU). Mature yeast 74S mitochondrial ribosomes consist of a small (37S) and a large (54S) subunit. The 37S small subunit contains a 15S ribosomal RNA (15S mt-rRNA) and at least 32 different proteins. The 54S large subunit contains a 21S rRNA (21S mt-rRNA) and at least 45 different proteins.

Its subcellular location is the mitochondrion. In terms of biological role, component of the mitochondrial ribosome (mitoribosome), a dedicated translation machinery responsible for the synthesis of mitochondrial genome-encoded proteins, including at least some of the essential transmembrane subunits of the mitochondrial respiratory chain. The mitoribosomes are attached to the mitochondrial inner membrane and translation products are cotranslationally integrated into the membrane. This is Small ribosomal subunit protein bS21m (mrp21) from Schizosaccharomyces pombe (strain 972 / ATCC 24843) (Fission yeast).